The sequence spans 635 residues: Threonine--tRNA ligase (635 aa).

Residues Met-1–Thr-61 enclose the TGS domain. A catalytic region spans residues Asp-242 to Pro-533. Zn(2+) is bound by residues Cys-333, His-384, and His-510.

It belongs to the class-II aminoacyl-tRNA synthetase family. Homodimer. Requires Zn(2+) as cofactor.

Its subcellular location is the cytoplasm. It carries out the reaction tRNA(Thr) + L-threonine + ATP = L-threonyl-tRNA(Thr) + AMP + diphosphate + H(+). In terms of biological role, catalyzes the attachment of threonine to tRNA(Thr) in a two-step reaction: L-threonine is first activated by ATP to form Thr-AMP and then transferred to the acceptor end of tRNA(Thr). Also edits incorrectly charged L-seryl-tRNA(Thr). The polypeptide is Threonine--tRNA ligase (Burkholderia cenocepacia (strain ATCC BAA-245 / DSM 16553 / LMG 16656 / NCTC 13227 / J2315 / CF5610) (Burkholderia cepacia (strain J2315))).